The primary structure comprises 95 residues: Histone-like DNA-binding protein (95 aa).

This sequence belongs to the bacterial histone-like protein family.

This Rickettsia felis (strain ATCC VR-1525 / URRWXCal2) (Rickettsia azadi) protein is Histone-like DNA-binding protein.